Reading from the N-terminus, the 156-residue chain is Small ribosomal subunit protein uS7 (156 aa).

This sequence belongs to the universal ribosomal protein uS7 family. As to quaternary structure, part of the 30S ribosomal subunit. Contacts proteins S9 and S11.

One of the primary rRNA binding proteins, it binds directly to 16S rRNA where it nucleates assembly of the head domain of the 30S subunit. Is located at the subunit interface close to the decoding center, probably blocks exit of the E-site tRNA. This Solibacter usitatus (strain Ellin6076) protein is Small ribosomal subunit protein uS7.